A 338-amino-acid polypeptide reads, in one-letter code: 3-isopropylmalate dehydrogenase (338 aa).

4 residues coordinate substrate: Arg88, Arg98, Arg122, and Asp212. Mg(2+) contacts are provided by Asp212, Asp236, and Asp240. 272 to 284 (GSAPDIAGQGIAD) serves as a coordination point for NAD(+).

It belongs to the isocitrate and isopropylmalate dehydrogenases family. LeuB type 2 subfamily. In terms of assembly, homodimer. The cofactor is Mg(2+). It depends on Mn(2+) as a cofactor.

It localises to the cytoplasm. The catalysed reaction is (2R,3S)-3-isopropylmalate + NAD(+) = 4-methyl-2-oxopentanoate + CO2 + NADH. The protein operates within amino-acid biosynthesis; L-leucine biosynthesis; L-leucine from 3-methyl-2-oxobutanoate: step 3/4. Functionally, catalyzes the oxidation of 3-carboxy-2-hydroxy-4-methylpentanoate (3-isopropylmalate) to 3-carboxy-4-methyl-2-oxopentanoate. The product decarboxylates to 4-methyl-2 oxopentanoate. The protein is 3-isopropylmalate dehydrogenase of Corynebacterium jeikeium (strain K411).